The following is a 548-amino-acid chain: MENMENDENIVVGPKPFYPIEEGSAGTQLRKYMERYAKLGAIAFTNAVTGVDYSYAEYLEKSCCLGKALQNYGLVVDGRIALCSENCEEFFIPVIAGLFIGVGVAPTNEIYTLRELVHSLGISKPTIVFSSKKGLDKVITVQKTVTTIKTIVILDSKVDYRGYQCLDTFIKRNTPPGFQASSFKTVEVDRKEQVALIMNSSGSTGLPKGVQLTHENTVTRFSHARDPIYGNQVSPGTAVLTVVPFHHGFGMFTTLGYLICGFRVVMLTKFDEETFLKTLQDYKCTSVILVPTLFAILNKSELLNKYDLSNLVEIASGGAPLSKEVGEAVARRFNLPGVRQGYGLTETTSAIIITPEGDDKPGASGKVVPLFKAKVIDLDTKKSLGPNRRGEVCVKGPMLMKGYVNNPEATKELIDEEGWLHTGDIGYYDEEKHFFIVDRLKSLIKYKGYQVPPAELESVLLQHPSIFDAGVAGVPDPVAGELPGAVVVLESGKNMTEKEVMDYVASQVSNAKRLRGGVRFVDEVPKGLTGKIDGRAIREILKKPVAKM.

Residues A546–M548 carry the Microbody targeting signal motif.

The protein belongs to the ATP-dependent AMP-binding enzyme family. The cofactor is Mg(2+).

It is found in the peroxisome. The enzyme catalyses firefly D-luciferin + ATP + O2 = firefly oxyluciferin + hnu + AMP + CO2 + diphosphate. Functionally, produces green light with a wavelength of 544 nm. The polypeptide is Luciferin 4-monooxygenase (Nipponoluciola cruciata (Genji firefly)).